A 148-amino-acid polypeptide reads, in one-letter code: Urease accessory protein UreE (148 aa).

This sequence belongs to the UreE family.

It localises to the cytoplasm. Involved in urease metallocenter assembly. Binds nickel. Probably functions as a nickel donor during metallocenter assembly. The polypeptide is Urease accessory protein UreE (Geobacillus kaustophilus (strain HTA426)).